A 579-amino-acid chain; its full sequence is Zinc finger protein 382 (579 aa).

Basic residues predominate over residues 1–12 (MGRPGRKPRGRA). Residues 1 to 37 (MGRPGRKPRGRARPGLFPFPKEELRQGGSSPANLNAM) are disordered. The mediates interaction with TRIM28 stretch occupies residues 12 to 135 (ARPGLFPFPK…DKPPKSIVII (124 aa)). Polar residues predominate over residues 27–36 (GGSSPANLNA). 2 represses transcription regions span residues 40–81 (GPVS…FISV) and 105–240 (IFPS…PEQR). The 72-residue stretch at 42–113 (VSFKDVTVDF…RIFPSQSYLE (72 aa)) folds into the KRAB domain. A C2H2-type 1; degenerate zinc finger spans residues 241–263 (FEYNKCDSSFLMTGVEFPHGRAH). 9 consecutive C2H2-type zinc fingers follow at residues 325-347 (FQCP…ERIH), 353-375 (YICC…EKTH), 381-403 (YLCV…HKAH), 409-431 (YECT…QRTH), 437-459 (YQCT…QRTH), 465-487 (YICS…QRIH), 493-515 (YICS…YRIH), 521-543 (NGCP…QKIH), and 549-571 (YECQ…QKTH). A required for transcriptional repression activity; probably mediates sequence-specific DNA-binding region spans residues 325-579 (FQCPYCGNSF…THKTETMRFQ (255 aa)).

The protein belongs to the krueppel C2H2-type zinc-finger protein family. As to quaternary structure, interacts with TRIM28; enhances the transcriptional repressor activity.

It is found in the nucleus. Its function is as follows. Functions as a sequence-specific transcriptional repressor. In Mus musculus (Mouse), this protein is Zinc finger protein 382 (Znf382).